The sequence spans 149 residues: Calmodulin (149 aa).

A2 is subject to N-acetylalanine. EF-hand domains lie at 8–43 (DQIS…LGQN), 44–79 (PTEA…KMKD), 81–116 (DSEE…LGEK), and 117–149 (LTDE…MMAK). Ca(2+) contacts are provided by D21, D23, D25, C27, E32, D57, D59, N61, T63, E68, D94, D96, N98, and E105. K116 carries the post-translational modification N6,N6,N6-trimethyllysine. 5 residues coordinate Ca(2+): D130, D132, D134, Q136, and E141.

Belongs to the calmodulin family.

In terms of biological role, calmodulin mediates the control of a large number of enzymes, ion channels and other proteins by Ca(2+). Among the enzymes to be stimulated by the calmodulin-Ca(2+) complex are a number of protein kinases and phosphatases. The chain is Calmodulin (CCM1) from Capsicum annuum (Capsicum pepper).